We begin with the raw amino-acid sequence, 172 residues long: Transcription factor MafF (172 aa).

The basic motif stretch occupies residues 51–76 (RLKQRRRTLKNRGYAASCRVKRVCQK). Residues 51 to 114 (RLKQRRRTLK…DALRGKCEAL (64 aa)) enclose the bZIP domain. The tract at residues 79 to 93 (LQKQKSELEREVDKL) is leucine-zipper. Residues 140 to 172 (VKSAPSPGPGPAPGPGPASGPGPAPGPAPAACS) are disordered. Over residues 145-172 (SPGPGPAPGPGPASGPGPAPGPAPAACS) the composition is skewed to pro residues.

It belongs to the bZIP family. Maf subfamily. Monomer and homo- or heterodimer. Interacts with MIP. Forms high affinity heterodimers with members of the CNC-bZIP family such as NFE2L1/NRF1.

The protein localises to the nucleus. Functionally, since they lack a putative transactivation domain, the small Mafs behave as transcriptional repressors when they dimerize among themselves. However, they seem to serve as transcriptional activators by dimerizing with other (usually larger) basic-zipper proteins, such as NFE2L1/NRF1, and recruiting them to specific DNA-binding sites. Interacts with the upstream promoter region of the oxytocin receptor gene. May be a transcriptional enhancer in the up-regulation of the oxytocin receptor gene at parturition. This is Transcription factor MafF (MAFF) from Bos taurus (Bovine).